The primary structure comprises 132 residues: Large ribosomal subunit protein bL12 (132 aa).

Belongs to the bacterial ribosomal protein bL12 family. In terms of assembly, homodimer. Part of the ribosomal stalk of the 50S ribosomal subunit. Forms a multimeric L10(L12)X complex, where L10 forms an elongated spine to which 2 to 4 L12 dimers bind in a sequential fashion. Binds GTP-bound translation factors.

Its function is as follows. Forms part of the ribosomal stalk which helps the ribosome interact with GTP-bound translation factors. Is thus essential for accurate translation. This is Large ribosomal subunit protein bL12 from Chloroflexus aggregans (strain MD-66 / DSM 9485).